We begin with the raw amino-acid sequence, 286 residues long: 4-hydroxybenzoate octaprenyltransferase (286 aa).

9 helical membrane-spanning segments follow: residues 22 to 42 (IGTL…SAGV), 45 to 65 (FSLL…GCVI), 90 to 110 (LTAV…FVLV), 113 to 133 (LNQF…IYPF), 142 to 162 (QVVL…AVVG), 169 to 189 (WLLF…YAMV), 212 to 232 (LYIA…GWLE), 236 to 256 (VSYY…QWLI), and 265 to 285 (FRAF…IMLA).

This sequence belongs to the UbiA prenyltransferase family. The cofactor is Mg(2+).

The protein localises to the cell inner membrane. The enzyme catalyses all-trans-octaprenyl diphosphate + 4-hydroxybenzoate = 4-hydroxy-3-(all-trans-octaprenyl)benzoate + diphosphate. It participates in cofactor biosynthesis; ubiquinone biosynthesis. Catalyzes the prenylation of para-hydroxybenzoate (PHB) with an all-trans polyprenyl group. Mediates the second step in the final reaction sequence of ubiquinone-8 (UQ-8) biosynthesis, which is the condensation of the polyisoprenoid side chain with PHB, generating the first membrane-bound Q intermediate 3-octaprenyl-4-hydroxybenzoate. The chain is 4-hydroxybenzoate octaprenyltransferase from Tolumonas auensis (strain DSM 9187 / NBRC 110442 / TA 4).